The chain runs to 186 residues: Ribosome-recycling factor (186 aa).

The protein belongs to the RRF family.

It is found in the cytoplasm. Its function is as follows. Responsible for the release of ribosomes from messenger RNA at the termination of protein biosynthesis. May increase the efficiency of translation by recycling ribosomes from one round of translation to another. In Bartonella bacilliformis (strain ATCC 35685 / KC583 / Herrer 020/F12,63), this protein is Ribosome-recycling factor.